The sequence spans 102 residues: Small ribosomal subunit protein uS10 (102 aa).

This sequence belongs to the universal ribosomal protein uS10 family. As to quaternary structure, part of the 30S ribosomal subunit.

Involved in the binding of tRNA to the ribosomes. This Rhodospirillum rubrum (strain ATCC 11170 / ATH 1.1.1 / DSM 467 / LMG 4362 / NCIMB 8255 / S1) protein is Small ribosomal subunit protein uS10.